We begin with the raw amino-acid sequence, 345 residues long: Matrix protein (345 aa).

The interval 148 to 185 (KKKSKAKSAEGPSASTEDIKDSDTKGNQDIGDNGDLNS) is disordered. The segment covering 164–173 (EDIKDSDTKG) has biased composition (basic and acidic residues).

The protein localises to the virion. This Aphis (Hairy beggarticks) protein is Matrix protein (M2).